A 496-amino-acid chain; its full sequence is Cytochrome P450 71D180 (496 aa).

A helical; Signal-anchor for type II membrane protein membrane pass occupies residues 1-21 (MDISISWVVIIVFVLSYLILM). C435 provides a ligand contact to heme. The segment at 471–496 (MSETPGLSGPRKNPLIMIPTIHNPTS) is disordered.

The protein belongs to the cytochrome P450 family. The cofactor is heme.

The protein localises to the membrane. The catalysed reaction is gamma-terpinene + 2 reduced [NADPH--hemoprotein reductase] + 2 O2 = carvacrol + 2 oxidized [NADPH--hemoprotein reductase] + 3 H2O + 2 H(+). It carries out the reaction (4S)-limonene + reduced [NADPH--hemoprotein reductase] + O2 = (1S,5R)-carveol + oxidized [NADPH--hemoprotein reductase] + H2O + H(+). The enzyme catalyses (4R)-limonene + reduced [NADPH--hemoprotein reductase] + O2 = (1R,5S)-carveol + oxidized [NADPH--hemoprotein reductase] + H2O + H(+). It participates in secondary metabolite biosynthesis; terpenoid biosynthesis. In terms of biological role, involved in the biosynthesis of phenolic monoterpenes natural products thymol and carvacrol which have a broad range of biological activities acting as antimicrobial compounds, insecticides, antioxidants and pharmaceutical agents. Catalyzes the C2-hydroxylation of gamma-terpinene to produce carvacrol. Mediates also the C6-hydroxylation of (4S)-limonene and (4R)-limonene to form carveol. The protein is Cytochrome P450 71D180 of Origanum majorana (Sweet marjoram).